Here is a 279-residue protein sequence, read N- to C-terminus: Large ribosomal subunit protein uL2 (279 aa).

The tract at residues 202 to 279 is disordered; sequence NASIGKAGRS…TSRHKSKKKG (78 aa). The segment covering 209 to 220 has biased composition (basic residues); it reads GRSRWLGRRPHN.

It belongs to the universal ribosomal protein uL2 family. In terms of assembly, part of the 50S ribosomal subunit. Forms a bridge to the 30S subunit in the 70S ribosome.

Its function is as follows. One of the primary rRNA binding proteins. Required for association of the 30S and 50S subunits to form the 70S ribosome, for tRNA binding and peptide bond formation. It has been suggested to have peptidyltransferase activity; this is somewhat controversial. Makes several contacts with the 16S rRNA in the 70S ribosome. The polypeptide is Large ribosomal subunit protein uL2 (Methylocella silvestris (strain DSM 15510 / CIP 108128 / LMG 27833 / NCIMB 13906 / BL2)).